We begin with the raw amino-acid sequence, 229 residues long: Large ribosomal subunit protein uL1 (229 aa).

This sequence belongs to the universal ribosomal protein uL1 family. In terms of assembly, part of the 50S ribosomal subunit.

Its function is as follows. Binds directly to 23S rRNA. The L1 stalk is quite mobile in the ribosome, and is involved in E site tRNA release. Protein L1 is also a translational repressor protein, it controls the translation of the L11 operon by binding to its mRNA. The sequence is that of Large ribosomal subunit protein uL1 from Clostridium acetobutylicum (strain ATCC 824 / DSM 792 / JCM 1419 / IAM 19013 / LMG 5710 / NBRC 13948 / NRRL B-527 / VKM B-1787 / 2291 / W).